The following is a 354-amino-acid chain: Uroporphyrinogen decarboxylase (354 aa).

Residues 27 to 31 (RQAGR), Asp77, Tyr154, Thr209, and His327 contribute to the substrate site.

Belongs to the uroporphyrinogen decarboxylase family. As to quaternary structure, homodimer.

The protein localises to the cytoplasm. The catalysed reaction is uroporphyrinogen III + 4 H(+) = coproporphyrinogen III + 4 CO2. Its pathway is porphyrin-containing compound metabolism; protoporphyrin-IX biosynthesis; coproporphyrinogen-III from 5-aminolevulinate: step 4/4. Catalyzes the decarboxylation of four acetate groups of uroporphyrinogen-III to yield coproporphyrinogen-III. This Salmonella schwarzengrund (strain CVM19633) protein is Uroporphyrinogen decarboxylase.